We begin with the raw amino-acid sequence, 339 residues long: Catalase-related peroxidase (339 aa).

An N-terminal signal peptide occupies residues 1–31; that stretch reads MIRIRNRWFRWLAIALASLVASIGIATVGFA. The active site involves H58. Y328 serves as a coordination point for heme.

It belongs to the catalase family. The cofactor is heme.

It is found in the periplasm. Has an organic peroxide-dependent peroxidase activity. The protein is Catalase-related peroxidase (srpA) of Synechococcus elongatus (strain ATCC 33912 / PCC 7942 / FACHB-805) (Anacystis nidulans R2).